The chain runs to 323 residues: Thioredoxin reductase (323 aa).

FAD is bound at residue 42 to 49; it reads YRAEADGA. A disulfide bridge connects residues Cys143 and Cys146. 286–295 lines the FAD pocket; it reads DVLCNEVKQA.

Belongs to the class-II pyridine nucleotide-disulfide oxidoreductase family. As to quaternary structure, homodimer. FAD is required as a cofactor.

It is found in the cytoplasm. It carries out the reaction [thioredoxin]-dithiol + NADP(+) = [thioredoxin]-disulfide + NADPH + H(+). The protein is Thioredoxin reductase (trxB) of Aquifex aeolicus (strain VF5).